Here is a 197-residue protein sequence, read N- to C-terminus: MADSMQLAGIVLAGGESRRMGRDKATLPGPRGAATLLEYVVGVLIQRCDPIFVMAAPGQPLPEVTARIIRDEIRGQGPLPATGRGLRAAAEAGARYAFVCAVDMPLLSPELIDDLVHLATETNAEVVLPWDGRSHYLASLYRTDLAERIDRLVAGGARSMRALIDASDAQQIVLPESRFLANVNTEADLRALAQARA.

GTP-binding positions include 12–14, Lys-24, Asp-71, and Asp-103; that span reads LAG. Mg(2+) is bound at residue Asp-103.

This sequence belongs to the MobA family. Mg(2+) is required as a cofactor.

Its subcellular location is the cytoplasm. It catalyses the reaction Mo-molybdopterin + GTP + H(+) = Mo-molybdopterin guanine dinucleotide + diphosphate. Functionally, transfers a GMP moiety from GTP to Mo-molybdopterin (Mo-MPT) cofactor (Moco or molybdenum cofactor) to form Mo-molybdopterin guanine dinucleotide (Mo-MGD) cofactor. The chain is Probable molybdenum cofactor guanylyltransferase from Mycolicibacterium paratuberculosis (strain ATCC BAA-968 / K-10) (Mycobacterium paratuberculosis).